The chain runs to 233 residues: Small ribosomal subunit protein uS2c (233 aa).

It belongs to the universal ribosomal protein uS2 family.

The protein resides in the plastid. The protein localises to the cyanelle. The protein is Small ribosomal subunit protein uS2c (rps2) of Cyanophora paradoxa.